The chain runs to 101 residues: Small ribosomal subunit protein uS14 (101 aa).

This sequence belongs to the universal ribosomal protein uS14 family. In terms of assembly, part of the 30S ribosomal subunit. Contacts proteins S3 and S10.

Its function is as follows. Binds 16S rRNA, required for the assembly of 30S particles and may also be responsible for determining the conformation of the 16S rRNA at the A site. This is Small ribosomal subunit protein uS14 from Bartonella henselae (strain ATCC 49882 / DSM 28221 / CCUG 30454 / Houston 1) (Rochalimaea henselae).